The sequence spans 201 residues: Recombination protein RecR (201 aa).

The C4-type zinc-finger motif lies at 59 to 74 (CSRCQNFCEAELCSIC). The region spanning 82-177 (RVLCVVESPT…PVSRIAHGIP (96 aa)) is the Toprim domain.

The protein belongs to the RecR family.

In terms of biological role, may play a role in DNA repair. It seems to be involved in an RecBC-independent recombinational process of DNA repair. It may act with RecF and RecO. This chain is Recombination protein RecR, found in Hahella chejuensis (strain KCTC 2396).